We begin with the raw amino-acid sequence, 412 residues long: Peptidase T (412 aa).

Position 84 (H84) interacts with Zn(2+). D86 is a catalytic residue. D146 is a Zn(2+) binding site. E179 serves as the catalytic Proton acceptor. Residues E180, D202, and H385 each coordinate Zn(2+).

The protein belongs to the peptidase M20B family. Zn(2+) is required as a cofactor.

Its subcellular location is the cytoplasm. The catalysed reaction is Release of the N-terminal residue from a tripeptide.. Its function is as follows. Cleaves the N-terminal amino acid of tripeptides. This is Peptidase T from Haemophilus influenzae (strain ATCC 51907 / DSM 11121 / KW20 / Rd).